Consider the following 128-residue polypeptide: Fluoride-specific ion channel FluC (128 aa).

The next 4 helical transmembrane spans lie at 5-25 (IVAIFVGAGLGALLRWFLSIG), 35-55 (LGTLASNLIGGYLIGIAVVAF), 67-87 (LFVITGFMGGLTTFSTYSVEV), and 96-116 (FGWALAVAALHLIGSFTLTGL). 2 residues coordinate Na(+): G75 and T78.

This sequence belongs to the fluoride channel Fluc/FEX (TC 1.A.43) family.

The protein localises to the cell inner membrane. The enzyme catalyses fluoride(in) = fluoride(out). With respect to regulation, na(+) is not transported, but it plays an essential structural role and its presence is essential for fluoride channel function. Fluoride-specific ion channel. Important for reducing fluoride concentration in the cell, thus reducing its toxicity. The chain is Fluoride-specific ion channel FluC from Burkholderia pseudomallei (strain 1106a).